The sequence spans 628 residues: MSKVIGIDLGTTNSCVAVYENGEAKIIPNKEGKNTTPSIVAYTDKGEVLVGDPAKRQAITNPEKTIYSIKRIMGLMMNEPNAKEAQSKVGYKIVDRNGAAAVEIAGKVYTPQEISAKILGKLKADAEEYLGDKVTDAVITVPAYFNDAQRKATQEAGTIAGLNVLRIINEPTAASLAYGLDKKGEEKVLVYDLGGGTFDVTVLEIGDGTFEVLSTDGNAFLGGDDFDNAIIDWLAKEFKDENGFDIKNDKMALQRLKDAAENAKKELSSAESTEINLPFISMGNAGPIHLVKSLTRAKFESMTEKLIDETLDHIKIALKEAGLSKGDIDEIIMVGGSTRLPKANQVVKEFFGKDLNKGVNPDEVVAAGAAVQAGVLRGDVKDVLLLDVTPLSLGIETLGGVMTKLIDKGTTIPVKKSQVFSTADDNQPAVSIHVCQGEREFAKDNKSLGMFELSDIPAAPRGVPQIEVTFDIDANGVLNVSAKDKGTGKENKITISGSSGLSDAEIEKMVAEAEANKEADAKKKAVIEVRNQADALLHSTRKTLEENENAISEDEKKAIIDAAADLEETLKDENATKEQIEEKLKTLTDKSHKLAEAMYKKEQGEQAGAQPNQKAKKDDDDVIDAEVE.

Phosphothreonine; by autocatalysis is present on Thr-197. Over residues 595-604 (AEAMYKKEQG) the composition is skewed to basic and acidic residues. Residues 595-628 (AEAMYKKEQGEQAGAQPNQKAKKDDDDVIDAEVE) are disordered.

Belongs to the heat shock protein 70 family.

Acts as a chaperone. In Aliarcobacter butzleri (strain RM4018) (Arcobacter butzleri), this protein is Chaperone protein DnaK.